The sequence spans 406 residues: Renin (406 aa).

A signal peptide spans 1–23; sequence MDGWRRMPRWGLLLLLWGSCTFG. Residues 24–66 constitute a propeptide, activation peptide; it reads LPTDTTTFKRIFLKRMPSIRESLKERGVDMARLGPEWSQPMKR. The N-linked (GlcNAc...) asparagine glycan is linked to asparagine 71. The Peptidase A1 domain maps to 86–403; the sequence is YYGEIGIGTP…DRRNNRIGFA (318 aa). Aspartate 104 is a catalytic residue. Cysteine 117 and cysteine 124 are joined by a disulfide. The N-linked (GlcNAc...) asparagine glycan is linked to asparagine 141. The cysteines at positions 283 and 287 are disulfide-linked. Aspartate 292 is an active-site residue. A disulfide bridge links cysteine 325 with cysteine 362.

Belongs to the peptidase A1 family. As to quaternary structure, interacts with ATP6AP2.

It localises to the secreted. It is found in the membrane. The catalysed reaction is Cleavage of Leu-|-Xaa bond in angiotensinogen to generate angiotensin I.. Interaction with ATP6AP2 results in a 5-fold increased efficiency in angiotensinogen processing. Renin is a highly specific endopeptidase, whose only known function is to generate angiotensin I from angiotensinogen in the plasma, initiating a cascade of reactions that produce an elevation of blood pressure and increased sodium retention by the kidney. This Macaca fascicularis (Crab-eating macaque) protein is Renin (REN).